The chain runs to 427 residues: Chaperone SurA (427 aa).

Residues Met-1–Ala-13 form the signal peptide. 2 PpiC domains span residues Ser-164–Glu-265 and Arg-275–Gly-374.

It is found in the periplasm. The catalysed reaction is [protein]-peptidylproline (omega=180) = [protein]-peptidylproline (omega=0). Its function is as follows. Chaperone involved in the correct folding and assembly of outer membrane proteins. Recognizes specific patterns of aromatic residues and the orientation of their side chains, which are found more frequently in integral outer membrane proteins. May act in both early periplasmic and late outer membrane-associated steps of protein maturation. The sequence is that of Chaperone SurA from Pseudomonas putida (strain ATCC 47054 / DSM 6125 / CFBP 8728 / NCIMB 11950 / KT2440).